The following is a 489-amino-acid chain: Ecdysteroid UDP-glucosyltransferase (489 aa).

The first 17 residues, 1 to 17, serve as a signal peptide directing secretion; the sequence is MVFLIIALTLLATGARA.

This sequence belongs to the UDP-glycosyltransferase family.

Catalyzes the transfer of glucose from UDP-glucose to ecdysteroids which are insect molting hormones. Expression of egt interferes with normal insect development and block molting. The sequence is that of Ecdysteroid UDP-glucosyltransferase (EGT) from Orgyia pseudotsugata (Douglas-fir tussock moth).